Consider the following 1242-residue polypeptide: Protein jagged-1a (1242 aa).

The first 28 residues, Met-1–Ala-28, serve as a signal peptide directing secretion. At Ser-29 to Tyr-1070 the chain is on the extracellular side. An N-linked (GlcNAc...) asparagine glycan is attached at Asn-141. In terms of domain architecture, DSL spans Val-186–Cys-230. Intrachain disulfides connect Cys-188-Cys-197 and Cys-201-Cys-213. Residue Asn-218 is glycosylated (N-linked (GlcNAc...) asparagine). Cystine bridges form between Cys-221/Cys-230, Cys-235/Cys-246, Cys-239/Cys-252, Cys-254/Cys-263, Cys-266/Cys-277, Cys-272/Cys-283, Cys-285/Cys-294, Cys-301/Cys-313, Cys-307/Cys-323, Cys-325/Cys-334, Cys-341/Cys-352, Cys-346/Cys-361, Cys-363/Cys-372, Cys-379/Cys-390, Cys-384/Cys-399, Cys-401/Cys-410, Cys-417/Cys-428, Cys-422/Cys-437, Cys-439/Cys-448, Cys-455/Cys-465, Cys-459/Cys-474, Cys-476/Cys-485, Cys-492/Cys-503, Cys-497/Cys-512, Cys-514/Cys-523, Cys-530/Cys-541, Cys-535/Cys-550, Cys-552/Cys-561, Cys-600/Cys-618, Cys-620/Cys-629, Cys-636/Cys-647, Cys-641/Cys-656, Cys-658/Cys-667, Cys-674/Cys-685, Cys-679/Cys-694, Cys-696/Cys-705, Cys-712/Cys-723, Cys-717/Cys-732, and Cys-734/Cys-743. The region spanning Asn-231–Asp-264 is the EGF-like 1 domain. Residues Gln-265–Asp-295 form the EGF-like 2; atypical domain. EGF-like domains follow at residues Asp-297 to Glu-335 and Ala-337 to Asn-373. Positions Asn-375–Leu-411 constitute an EGF-like 5; calcium-binding domain. Asn-385 carries an N-linked (GlcNAc...) asparagine glycan. The 37-residue stretch at Asp-413 to Asp-449 folds into the EGF-like 6; calcium-binding domain. An EGF-like 7; calcium-binding domain is found at Asn-451 to Glu-486. Positions Asp-488–Gln-524 constitute an EGF-like 8; calcium-binding domain. 2 consecutive EGF-like domains span residues Asp-526–Ser-562 and Val-575–His-630. A glycan (N-linked (GlcNAc...) asparagine) is linked at Asn-560. The EGF-like 11; calcium-binding domain occupies Asn-632–Glu-668. The EGF-like 12; calcium-binding domain maps to Asn-670–His-706. EGF-like domains follow at residues Arg-708–Asn-744 and Lys-747–Ser-783. Asn-748 carries N-linked (GlcNAc...) asparagine glycosylation. Disulfide bonds link Cys-751–Cys-762, Cys-756–Cys-771, Cys-773–Cys-782, Cys-789–Cys-800, Cys-794–Cys-809, Cys-811–Cys-820, Cys-827–Cys-838, Cys-832–Cys-847, and Cys-849–Cys-858. Positions Asn-785–Arg-821 constitute an EGF-like 15; calcium-binding domain. The region spanning Asn-823–Gln-859 is the EGF-like 16; calcium-binding domain. Residues Thr-917–Ala-959 form the EGF-like 17 domain. Asn-960, Asn-991, and Asn-1046 each carry an N-linked (GlcNAc...) asparagine glycan. The chain crosses the membrane as a helical span at residues Met-1071–Ile-1095. The Cytoplasmic segment spans residues Arg-1096–Val-1242. The disordered stretch occupies residues Arg-1191–Val-1242. Over residues Asn-1210–Gln-1232 the composition is skewed to basic and acidic residues.

The protein resides in the membrane. It localises to the cell membrane. Functionally, ligand for multiple Notch receptors and involved in the mediation of Notch signaling. Seems to be involved in cell-fate decisions. In Danio rerio (Zebrafish), this protein is Protein jagged-1a (jag1a).